A 622-amino-acid polypeptide reads, in one-letter code: Wall-associated receptor kinase-like 21 (622 aa).

Residues 1 to 21 form the signal peptide; the sequence is MAETPQPYLIFVFFVFTLTVA. The Extracellular portion of the chain corresponds to 22 to 247; it reads TQTTGSVKCK…LVYKRKGLHK (226 aa). 5 N-linked (GlcNAc...) asparagine glycosylation sites follow: N50, N114, N131, N160, and N195. A helical transmembrane segment spans residues 248 to 268; sequence LVVLGTAGILVGVLVIVVLIA. Residues 269 to 622 lie on the Cytoplasmic side of the membrane; the sequence is TYFFRNKQSA…MKRQQSFPRE (354 aa). The region spanning 314-594 is the Protein kinase domain; it reads FSDKNMLGTG…EITEDLHRIK (281 aa). ATP is bound by residues 320–328 and K342; that span reads LGTGAYGTV. D439 acts as the Proton acceptor in catalysis.

This sequence belongs to the protein kinase superfamily. Ser/Thr protein kinase family.

Its subcellular location is the membrane. The enzyme catalyses L-seryl-[protein] + ATP = O-phospho-L-seryl-[protein] + ADP + H(+). The catalysed reaction is L-threonyl-[protein] + ATP = O-phospho-L-threonyl-[protein] + ADP + H(+). In terms of biological role, serine/threonine-protein kinase that may function as a signaling receptor of extracellular matrix component. The polypeptide is Wall-associated receptor kinase-like 21 (WAKL21) (Arabidopsis thaliana (Mouse-ear cress)).